The chain runs to 196 residues: Molybdenum cofactor guanylyltransferase (196 aa).

GTP is bound by residues 12–14 (LAG), lysine 25, asparagine 53, aspartate 71, and aspartate 101. Residue aspartate 101 coordinates Mg(2+).

The protein belongs to the MobA family. As to quaternary structure, monomer. Requires Mg(2+) as cofactor.

The protein localises to the cytoplasm. The enzyme catalyses Mo-molybdopterin + GTP + H(+) = Mo-molybdopterin guanine dinucleotide + diphosphate. In terms of biological role, transfers a GMP moiety from GTP to Mo-molybdopterin (Mo-MPT) cofactor (Moco or molybdenum cofactor) to form Mo-molybdopterin guanine dinucleotide (Mo-MGD) cofactor. The polypeptide is Molybdenum cofactor guanylyltransferase (Bordetella petrii (strain ATCC BAA-461 / DSM 12804 / CCUG 43448)).